The sequence spans 715 residues: Fatty acid oxidation complex subunit alpha (715 aa).

The segment at 1-190 (MIYEGKAITV…KVGAVDAVVA (190 aa)) is enoyl-CoA hydratase/isomerase. Asp-297 is a binding site for substrate. The segment at 312–715 (KDVKQAAVLG…MAKNGQSFFG (404 aa)) is 3-hydroxyacyl-CoA dehydrogenase. Residues Met-325, Asp-344, 401 to 403 (VVE), Lys-408, and Ser-430 each bind NAD(+). His-451 acts as the For 3-hydroxyacyl-CoA dehydrogenase activity in catalysis. Asn-454 contributes to the NAD(+) binding site. Substrate is bound by residues Asn-501 and Tyr-660.

This sequence in the N-terminal section; belongs to the enoyl-CoA hydratase/isomerase family. It in the C-terminal section; belongs to the 3-hydroxyacyl-CoA dehydrogenase family. Heterotetramer of two alpha chains (FadB) and two beta chains (FadA).

The catalysed reaction is a (3S)-3-hydroxyacyl-CoA + NAD(+) = a 3-oxoacyl-CoA + NADH + H(+). It carries out the reaction a (3S)-3-hydroxyacyl-CoA = a (2E)-enoyl-CoA + H2O. The enzyme catalyses a 4-saturated-(3S)-3-hydroxyacyl-CoA = a (3E)-enoyl-CoA + H2O. It catalyses the reaction (3S)-3-hydroxybutanoyl-CoA = (3R)-3-hydroxybutanoyl-CoA. The catalysed reaction is a (3Z)-enoyl-CoA = a 4-saturated (2E)-enoyl-CoA. It carries out the reaction a (3E)-enoyl-CoA = a 4-saturated (2E)-enoyl-CoA. The protein operates within lipid metabolism; fatty acid beta-oxidation. Its function is as follows. Involved in the aerobic and anaerobic degradation of long-chain fatty acids via beta-oxidation cycle. Catalyzes the formation of 3-oxoacyl-CoA from enoyl-CoA via L-3-hydroxyacyl-CoA. It can also use D-3-hydroxyacyl-CoA and cis-3-enoyl-CoA as substrate. This Pseudomonas fluorescens (strain Pf0-1) protein is Fatty acid oxidation complex subunit alpha.